A 342-amino-acid chain; its full sequence is Methylthioribose-1-phosphate isomerase (342 aa).

Substrate contacts are provided by residues 44–46, R85, and Q192; that span reads RGA. The active-site Proton donor is the D233. Residue 243–244 coordinates substrate; sequence NK.

The protein belongs to the eIF-2B alpha/beta/delta subunits family. MtnA subfamily.

The enzyme catalyses 5-(methylsulfanyl)-alpha-D-ribose 1-phosphate = 5-(methylsulfanyl)-D-ribulose 1-phosphate. It participates in amino-acid biosynthesis; L-methionine biosynthesis via salvage pathway; L-methionine from S-methyl-5-thio-alpha-D-ribose 1-phosphate: step 1/6. Catalyzes the interconversion of methylthioribose-1-phosphate (MTR-1-P) into methylthioribulose-1-phosphate (MTRu-1-P). This is Methylthioribose-1-phosphate isomerase from Caldicellulosiruptor saccharolyticus (strain ATCC 43494 / DSM 8903 / Tp8T 6331).